A 145-amino-acid polypeptide reads, in one-letter code: 3-hydroxyacyl-[acyl-carrier-protein] dehydratase FabZ (145 aa).

H47 is a catalytic residue.

It belongs to the thioester dehydratase family. FabZ subfamily.

It localises to the cytoplasm. The catalysed reaction is a (3R)-hydroxyacyl-[ACP] = a (2E)-enoyl-[ACP] + H2O. Involved in unsaturated fatty acids biosynthesis. Catalyzes the dehydration of short chain beta-hydroxyacyl-ACPs and long chain saturated and unsaturated beta-hydroxyacyl-ACPs. The sequence is that of 3-hydroxyacyl-[acyl-carrier-protein] dehydratase FabZ from Thiobacillus denitrificans (strain ATCC 25259 / T1).